The following is a 354-amino-acid chain: Uroporphyrinogen decarboxylase (354 aa).

Substrate is bound by residues 28–32, aspartate 78, tyrosine 155, serine 210, and histidine 325; that span reads RQAGR.

This sequence belongs to the uroporphyrinogen decarboxylase family. As to quaternary structure, homodimer.

It localises to the cytoplasm. It carries out the reaction uroporphyrinogen III + 4 H(+) = coproporphyrinogen III + 4 CO2. It participates in porphyrin-containing compound metabolism; protoporphyrin-IX biosynthesis; coproporphyrinogen-III from 5-aminolevulinate: step 4/4. Its function is as follows. Catalyzes the decarboxylation of four acetate groups of uroporphyrinogen-III to yield coproporphyrinogen-III. This is Uroporphyrinogen decarboxylase from Trichodesmium erythraeum (strain IMS101).